Consider the following 442-residue polypeptide: Cyclin-A1-2 (442 aa).

2 stretches are compositionally biased toward polar residues: residues 1–12 (MSSSSRNLSQEN) and 39–63 (ITNQKNGSRNPSPSSTLVNCSNKIG). The interval 1 to 72 (MSSSSRNLSQ…GQSKKAPKPA (72 aa)) is disordered.

The protein belongs to the cyclin family. Cyclin AB subfamily. As to quaternary structure, interacts with CDC20-1, CDC20-2, FZR2/CCS52A1 and FZR1/CCS52A2. In terms of tissue distribution, expressed in roots, stems and flowers.

It localises to the cytoplasm. The protein localises to the nucleus. In terms of biological role, involved in the regulation of male meiosis progression. The protein is Cyclin-A1-2 (CYCA1-2) of Arabidopsis thaliana (Mouse-ear cress).